The sequence spans 88 residues: UPF0250 protein Shew_2940 (88 aa).

This sequence belongs to the UPF0250 family.

This is UPF0250 protein Shew_2940 from Shewanella loihica (strain ATCC BAA-1088 / PV-4).